We begin with the raw amino-acid sequence, 134 residues long: Small ribosomal subunit protein uS8c (134 aa).

Belongs to the universal ribosomal protein uS8 family. In terms of assembly, part of the 30S ribosomal subunit.

The protein localises to the plastid. It localises to the chloroplast. One of the primary rRNA binding proteins, it binds directly to 16S rRNA central domain where it helps coordinate assembly of the platform of the 30S subunit. The sequence is that of Small ribosomal subunit protein uS8c (rps8) from Capsella bursa-pastoris (Shepherd's purse).